We begin with the raw amino-acid sequence, 282 residues long: ATP phosphoribosyltransferase (282 aa).

Belongs to the ATP phosphoribosyltransferase family. Long subfamily. It depends on Mg(2+) as a cofactor.

The protein localises to the cytoplasm. The catalysed reaction is 1-(5-phospho-beta-D-ribosyl)-ATP + diphosphate = 5-phospho-alpha-D-ribose 1-diphosphate + ATP. Its pathway is amino-acid biosynthesis; L-histidine biosynthesis; L-histidine from 5-phospho-alpha-D-ribose 1-diphosphate: step 1/9. With respect to regulation, feedback inhibited by histidine. Functionally, catalyzes the condensation of ATP and 5-phosphoribose 1-diphosphate to form N'-(5'-phosphoribosyl)-ATP (PR-ATP). Has a crucial role in the pathway because the rate of histidine biosynthesis seems to be controlled primarily by regulation of HisG enzymatic activity. This is ATP phosphoribosyltransferase from Pyrobaculum islandicum (strain DSM 4184 / JCM 9189 / GEO3).